Here is a 377-residue protein sequence, read N- to C-terminus: Cobalt-precorrin-5B C(1)-methyltransferase (377 aa).

This sequence belongs to the CbiD family.

The enzyme catalyses Co-precorrin-5B + S-adenosyl-L-methionine = Co-precorrin-6A + S-adenosyl-L-homocysteine. Its pathway is cofactor biosynthesis; adenosylcobalamin biosynthesis; cob(II)yrinate a,c-diamide from sirohydrochlorin (anaerobic route): step 6/10. Its function is as follows. Catalyzes the methylation of C-1 in cobalt-precorrin-5B to form cobalt-precorrin-6A. The polypeptide is Cobalt-precorrin-5B C(1)-methyltransferase (Alkaliphilus metalliredigens (strain QYMF)).